A 500-amino-acid chain; its full sequence is Glycerol kinase (500 aa).

Thr-13 lines the ADP pocket. ATP contacts are provided by Thr-13, Thr-14, and Ser-15. Thr-13 is a binding site for sn-glycerol 3-phosphate. Position 17 (Arg-17) interacts with ADP. Positions 83, 84, and 135 each coordinate sn-glycerol 3-phosphate. Glycerol contacts are provided by Arg-83, Glu-84, and Tyr-135. His-231 bears the Phosphohistidine; by HPr mark. A sn-glycerol 3-phosphate-binding site is contributed by Asp-245. Positions 245 and 246 each coordinate glycerol. ADP is bound by residues Thr-267 and Gly-310. ATP contacts are provided by Thr-267, Gly-310, Gln-314, and Gly-411. Positions 411 and 415 each coordinate ADP.

Belongs to the FGGY kinase family. In terms of assembly, homotetramer and homodimer (in equilibrium). The phosphoenolpyruvate-dependent sugar phosphotransferase system (PTS), including enzyme I, and histidine-containing protein (HPr) are required for the phosphorylation, which leads to the activation of the enzyme.

The catalysed reaction is glycerol + ATP = sn-glycerol 3-phosphate + ADP + H(+). It participates in polyol metabolism; glycerol degradation via glycerol kinase pathway; sn-glycerol 3-phosphate from glycerol: step 1/1. Activated by phosphorylation and inhibited by fructose 1,6-bisphosphate (FBP). In terms of biological role, key enzyme in the regulation of glycerol uptake and metabolism. Catalyzes the phosphorylation of glycerol to yield sn-glycerol 3-phosphate. This is Glycerol kinase from Oceanobacillus iheyensis (strain DSM 14371 / CIP 107618 / JCM 11309 / KCTC 3954 / HTE831).